Consider the following 510-residue polypeptide: Archaeosine synthase subunit alpha (510 aa).

The region spanning 427–510 is the PUA domain; that stretch reads LGKFTINKAS…LKKGIAVKVR (84 aa).

The protein belongs to the archaeosine synthase type 1 family. Forms a robust complex with the archaeosine synthase beta subunit RaSEA, likely an alpha(2)beta(2) heterotetrameric structure. Formation of this complex highly increases lysine transfer activity.

The enzyme catalyses 7-cyano-7-carbaguanosine(15) in tRNA + L-lysine = 7-N-[(5S)-5-amino-5-carboxypentyl]formamidino-7-deazaguanosine(15) in tRNA. It participates in tRNA modification; archaeosine-tRNA biosynthesis. Its function is as follows. Functions in the biosynthesis of archaeosine, a modified nucleoside present in the dihydrouridine loop (D-loop) of archaeal tRNAs. Catalyzes the addition of L-lysine to the cyano group of 7-cyano-7-deazaguanine (preQ0)-modified tRNAs at position 15, to generate q0kN15-tRNA, a q0N lysine adduct identified as 7-N-[(5S)-5-amino-5-carboxypentyl]formamidino-7-deazaguanosine. The chain is Archaeosine synthase subunit alpha from Thermoplasma acidophilum (strain ATCC 25905 / DSM 1728 / JCM 9062 / NBRC 15155 / AMRC-C165).